We begin with the raw amino-acid sequence, 912 residues long: Multiple C2 and transmembrane domain-containing protein (912 aa).

Residues Met-1–Pro-33 show a composition bias toward low complexity. Disordered stretches follow at residues Met-1–Lys-80 and Ser-145–Ser-165. A compositionally biased stretch (polar residues) spans Pro-38–Arg-49. C2 domains follow at residues Gln-218–Leu-337, Arg-371–Leu-493, and Glu-522–Asp-637. Ca(2+)-binding residues include Asp-252, Asp-258, Asp-305, Asp-307, and Asp-313. The Ca(2+) site is built by Asp-553, Asp-559, Asp-605, and Asp-607. 2 helical membrane passes run Ile-729 to Leu-749 and Leu-826 to Leu-846. A disordered region spans residues Asn-887 to Ser-912.

Ca(2+) serves as cofactor. In terms of tissue distribution, motor neurons (at protein level).

The protein resides in the endoplasmic reticulum membrane. In terms of biological role, calcium sensor which is essential for the stabilization of normal baseline neurotransmitter release and for the induction and long-term maintenance of presynaptic homeostatic plasticity. The protein is Multiple C2 and transmembrane domain-containing protein of Drosophila melanogaster (Fruit fly).